Here is a 424-residue protein sequence, read N- to C-terminus: Histidine--tRNA ligase (424 aa).

The protein belongs to the class-II aminoacyl-tRNA synthetase family. Homodimer.

The protein resides in the cytoplasm. It catalyses the reaction tRNA(His) + L-histidine + ATP = L-histidyl-tRNA(His) + AMP + diphosphate + H(+). This is Histidine--tRNA ligase from Shewanella halifaxensis (strain HAW-EB4).